Consider the following 372-residue polypeptide: MATFSKLSERKRSTFIKYSREIRQSVQYDREAQIVKFNYHLKRPHELKDVLDKTFAPIVFEVSSTKKVESMVELAAKMDKVEGKGGHNAVAEEITKIVRADDIWTLLSGVEVTIQKRAFKRSLRAELKYVLITSFFNCSRHSDLKNADPTKFELVKNRYLNRVLRVLVCETKTRKPRYIYFFPVNKKTDPLIALHDLFSEAEPVPKSRASHQKTDQEWQMLRDSLLTNYDRFIATHAKQAVFGIKHGPKSHLGRHLMSSYLSHTNHGQWVSPFGNWSAGKDTVESNVARAKYVHIQADIPDELFAFLSQYYIQTPSGDFELIDSSEQPTTFINNLSTQEDISKSYGTWTQVVGQDVLEYVHSYAMGKLGIRK.

The Tyr recombinase Flp-type domain occupies 85–367; that stretch reads GGHNAVAEEI…EYVHSYAMGK (283 aa). The O-(3'-phospho-DNA)-tyrosine intermediate role is filled by Y292.

Belongs to the 'phage' integrase family.

In terms of biological role, catalyzes the recombination between the large inverted repetitions of the plasmid. This Lachancea fermentati (Zygosaccharomyces fermentati) protein is Recombinase Flp protein.